Here is a 388-residue protein sequence, read N- to C-terminus: Succinate--CoA ligase [ADP-forming] subunit beta (388 aa).

Residues lysine 9–glutamate 244 form the ATP-grasp domain. ATP contacts are provided by residues lysine 46, glycine 53–glycine 55, glutamate 99, valine 102, and glutamate 107. Mg(2+)-binding residues include asparagine 199 and aspartate 213. Residues asparagine 264 and glycine 321–leucine 323 contribute to the substrate site.

It belongs to the succinate/malate CoA ligase beta subunit family. In terms of assembly, heterotetramer of two alpha and two beta subunits. The cofactor is Mg(2+).

The enzyme catalyses succinate + ATP + CoA = succinyl-CoA + ADP + phosphate. The catalysed reaction is GTP + succinate + CoA = succinyl-CoA + GDP + phosphate. Its pathway is carbohydrate metabolism; tricarboxylic acid cycle; succinate from succinyl-CoA (ligase route): step 1/1. In terms of biological role, succinyl-CoA synthetase functions in the citric acid cycle (TCA), coupling the hydrolysis of succinyl-CoA to the synthesis of either ATP or GTP and thus represents the only step of substrate-level phosphorylation in the TCA. The beta subunit provides nucleotide specificity of the enzyme and binds the substrate succinate, while the binding sites for coenzyme A and phosphate are found in the alpha subunit. In Desulfosudis oleivorans (strain DSM 6200 / JCM 39069 / Hxd3) (Desulfococcus oleovorans), this protein is Succinate--CoA ligase [ADP-forming] subunit beta.